A 330-amino-acid chain; its full sequence is Small ribosomal subunit protein uS15m (330 aa).

This sequence belongs to the universal ribosomal protein uS15 family. Component of the mitochondrial ribosome small subunit (28S) which comprises a 12S rRNA and about 30 distinct proteins.

Its subcellular location is the mitochondrion. This Caenorhabditis elegans protein is Small ribosomal subunit protein uS15m (mrps-15).